Here is a 147-residue protein sequence, read N- to C-terminus: Large ribosomal subunit protein bL9 (147 aa).

This sequence belongs to the bacterial ribosomal protein bL9 family.

Binds to the 23S rRNA. The chain is Large ribosomal subunit protein bL9 from Sulfurovum sp. (strain NBC37-1).